The chain runs to 414 residues: uncharacterized protein (414 aa).

3 disordered regions span residues 136-168 (SSKSMAPTAEKELEKPLENGSELQEGDSLTVPT), 298-322 (KNFPDSGMRRAVQTPSPQNKMSYHR), and 350-382 (PPHSRPMHGSYNKVHVNKEPKPNLSPDKYMSTS).

This is an uncharacterized protein from Macaca fascicularis (Crab-eating macaque).